Here is a 360-residue protein sequence, read N- to C-terminus: Phenylalanine--tRNA ligase alpha subunit (360 aa).

Residue glutamate 260 participates in Mg(2+) binding.

The protein belongs to the class-II aminoacyl-tRNA synthetase family. Phe-tRNA synthetase alpha subunit type 1 subfamily. In terms of assembly, tetramer of two alpha and two beta subunits. Requires Mg(2+) as cofactor.

It localises to the cytoplasm. It catalyses the reaction tRNA(Phe) + L-phenylalanine + ATP = L-phenylalanyl-tRNA(Phe) + AMP + diphosphate + H(+). This is Phenylalanine--tRNA ligase alpha subunit from Methylocella silvestris (strain DSM 15510 / CIP 108128 / LMG 27833 / NCIMB 13906 / BL2).